A 295-amino-acid chain; its full sequence is Outer surface protein B (295 aa).

The N-terminal stretch at 1 to 16 (MKQYLLGFTLVFALIA) is a signal peptide. Cys17 carries the N-palmitoyl cysteine lipid modification. Cys17 carries S-diacylglycerol cysteine lipidation.

It localises to the cell outer membrane. This Borreliella burgdorferi (Lyme disease spirochete) protein is Outer surface protein B (ospB).